We begin with the raw amino-acid sequence, 100 residues long: MTAKMAEPLYFRIWSSLNIICLMVTFLNVQLSKTPIVLMPLFIALLKNNRKRETKKQTISVLVQKREEKTKLVLDDANNHNHAFLYHCQYLGQKKHVVIQ.

The chain crosses the membrane as a helical span at residues 13–32; that stretch reads IWSSLNIICLMVTFLNVQLS.

It is found in the mitochondrion membrane. This is an uncharacterized protein from Schizosaccharomyces pombe (strain 972 / ATCC 24843) (Fission yeast).